The primary structure comprises 119 residues: MARIAGINIPTHKHAWVALTSIYGIGRTRALSICNAAGVPHDRRVRDLNDAEVEALRQEVGNYVIEGDLRRSVAMDIKRLMDLGCYRGMRHRRGLPVRGQQTQTNARTRKGPRRGPASR.

Positions 92–119 (RRGLPVRGQQTQTNARTRKGPRRGPASR) are disordered.

This sequence belongs to the universal ribosomal protein uS13 family. As to quaternary structure, part of the 30S ribosomal subunit. Forms a loose heterodimer with protein S19. Forms two bridges to the 50S subunit in the 70S ribosome.

Functionally, located at the top of the head of the 30S subunit, it contacts several helices of the 16S rRNA. In the 70S ribosome it contacts the 23S rRNA (bridge B1a) and protein L5 of the 50S subunit (bridge B1b), connecting the 2 subunits; these bridges are implicated in subunit movement. Contacts the tRNAs in the A and P-sites. The polypeptide is Small ribosomal subunit protein uS13 (Halorhodospira halophila (strain DSM 244 / SL1) (Ectothiorhodospira halophila (strain DSM 244 / SL1))).